The following is a 310-amino-acid chain: Cytochrome P450 monooxygenase ppzG (310 aa).

Cys-288 contacts heme.

The protein belongs to the cytochrome P450 family. Heme serves as cofactor.

It participates in secondary metabolite biosynthesis. Cytochrome P450 monooxygenase; part of the gene cluster that mediates the biosynthesis of pyrrolopyrazines, secondary metabolites showing insecticidal activity. The role of ppzG within the pathway has still to be determined. The single multifunctional NRPS ppzA is sufficient to produce peramine via condensation of 1-pyrroline-5-carboxylate and arginine, N-methylation of the alpha-amino group of arginine and reduction of the thioester and the cyclization to form an iminium ion resulting in release from the peptide synthetase. Deprotonation of this intermediate and oxidation of the pyrroline ring would give rise to peramine. In Epichloe species that produce only peramine, the peramine synthetase gene is not localized in a gene cluster, in contrast to Metarhizium species that contain additional pyrrolopyrazine biosynthesis genes. The 2-oxoglutarate-Fe(II) type oxidoreductase ppzC hydroxylates peramine to yield the newly identified compound 8-hydroxyperamine whereas ppzD converts L-proline into trans-4-hydroxy-L-proline, a precursor of peramine biosynthesis. The sequence is that of Cytochrome P450 monooxygenase ppzG (ppzG) from Metarhizium majus (strain ARSEF 297).